The chain runs to 495 residues: ATP synthase subunit beta, chloroplastic (495 aa).

Residue 172–179 participates in ATP binding; sequence GGAGVGKT.

It belongs to the ATPase alpha/beta chains family. In terms of assembly, F-type ATPases have 2 components, CF(1) - the catalytic core - and CF(0) - the membrane proton channel. CF(1) has five subunits: alpha(3), beta(3), gamma(1), delta(1), epsilon(1). CF(0) has four main subunits: a(1), b(1), b'(1) and c(9-12).

It localises to the plastid. Its subcellular location is the chloroplast thylakoid membrane. The enzyme catalyses ATP + H2O + 4 H(+)(in) = ADP + phosphate + 5 H(+)(out). Functionally, produces ATP from ADP in the presence of a proton gradient across the membrane. The catalytic sites are hosted primarily by the beta subunits. This Beaucarnea recurvata (Elephant-foot tree) protein is ATP synthase subunit beta, chloroplastic.